A 244-amino-acid polypeptide reads, in one-letter code: 7-cyano-7-deazaguanine synthase (244 aa).

Residue 17-27 coordinates ATP; sequence FSGGQDSTTCL. Zn(2+)-binding residues include cysteine 205, cysteine 220, cysteine 223, and cysteine 226.

Belongs to the QueC family. The cofactor is Zn(2+).

The catalysed reaction is 7-carboxy-7-deazaguanine + NH4(+) + ATP = 7-cyano-7-deazaguanine + ADP + phosphate + H2O + H(+). The protein operates within purine metabolism; 7-cyano-7-deazaguanine biosynthesis. Its function is as follows. Catalyzes the ATP-dependent conversion of 7-carboxy-7-deazaguanine (CDG) to 7-cyano-7-deazaguanine (preQ(0)). In Bordetella parapertussis (strain 12822 / ATCC BAA-587 / NCTC 13253), this protein is 7-cyano-7-deazaguanine synthase.